The following is a 343-amino-acid chain: Ornithine carbamoyltransferase (343 aa).

Carbamoyl phosphate-binding positions include 62–65, Gln89, Arg113, and 140–143; these read STRT and HPTQ. Residues Asn172, Asp236, and 240–241 contribute to the L-ornithine site; that span reads SM. Carbamoyl phosphate contacts are provided by residues 278–279 and Arg323; that span reads CL.

The protein belongs to the aspartate/ornithine carbamoyltransferase superfamily. OTCase family.

The protein localises to the cytoplasm. It catalyses the reaction carbamoyl phosphate + L-ornithine = L-citrulline + phosphate + H(+). It functions in the pathway amino-acid degradation; L-arginine degradation via ADI pathway; carbamoyl phosphate from L-arginine: step 2/2. Its function is as follows. Reversibly catalyzes the transfer of the carbamoyl group from carbamoyl phosphate (CP) to the N(epsilon) atom of ornithine (ORN) to produce L-citrulline. The protein is Ornithine carbamoyltransferase of Levilactobacillus brevis (strain ATCC 367 / BCRC 12310 / CIP 105137 / JCM 1170 / LMG 11437 / NCIMB 947 / NCTC 947) (Lactobacillus brevis).